Here is a 217-residue protein sequence, read N- to C-terminus: Small ribosomal subunit protein uS3 (217 aa).

Positions 38–106 constitute a KH type-2 domain; sequence IRKFIDNELK…KVHINVIEIK (69 aa).

The protein belongs to the universal ribosomal protein uS3 family. In terms of assembly, part of the 30S ribosomal subunit. Forms a tight complex with proteins S10 and S14.

In terms of biological role, binds the lower part of the 30S subunit head. Binds mRNA in the 70S ribosome, positioning it for translation. This Staphylococcus aureus (strain MSSA476) protein is Small ribosomal subunit protein uS3.